The following is a 734-amino-acid chain: Photosystem I P700 chlorophyll a apoprotein A2 (734 aa).

The next 8 membrane-spanning stretches (helical) occupy residues 46-69, 135-158, 175-199, 273-291, 330-353, 369-395, 417-439, and 517-535; these read IFASHFGQLAIIFLWTSGNLFHVA, LYIGALFLLITASMTLFAGWLHLQ, LNHHLSGLFGVSSLAWTGHLIHVAI, IAHHHLAIAVLFIVAGHMY, LHFQLGLALASLGVITSVVAQHMY, AALYTHHQYIAGFIMTGAFAHGAIFFI, AIISHLSWASLFLGFHTLGLYVH, and FLVHHAIALGLHTTTLILV. Positions 559 and 568 each coordinate [4Fe-4S] cluster. The next 2 membrane-spanning stretches (helical) occupy residues 575–596 and 643–665; these read AFYLAVFWMLNTIGWVTFYWHW and LSVWAWMFLFGHLIWATGFMFLI. 3 residues coordinate chlorophyll a: His-654, Met-662, and Tyr-670. Trp-671 contributes to the phylloquinone binding site. The helical transmembrane segment at 707–727 threads the bilayer; sequence VVGLAHFSVGYVFTYAAFLIA.

This sequence belongs to the PsaA/PsaB family. As to quaternary structure, the PsaA/B heterodimer binds the P700 chlorophyll special pair and subsequent electron acceptors. PSI consists of a core antenna complex that captures photons, and an electron transfer chain that converts photonic excitation into a charge separation. The eukaryotic PSI reaction center is composed of at least 11 subunits. It depends on P700 is a chlorophyll a/chlorophyll a' dimer, A0 is one or more chlorophyll a, A1 is one or both phylloquinones and FX is a shared 4Fe-4S iron-sulfur center. as a cofactor.

It localises to the plastid. It is found in the chloroplast thylakoid membrane. It carries out the reaction reduced [plastocyanin] + hnu + oxidized [2Fe-2S]-[ferredoxin] = oxidized [plastocyanin] + reduced [2Fe-2S]-[ferredoxin]. In terms of biological role, psaA and PsaB bind P700, the primary electron donor of photosystem I (PSI), as well as the electron acceptors A0, A1 and FX. PSI is a plastocyanin-ferredoxin oxidoreductase, converting photonic excitation into a charge separation, which transfers an electron from the donor P700 chlorophyll pair to the spectroscopically characterized acceptors A0, A1, FX, FA and FB in turn. Oxidized P700 is reduced on the lumenal side of the thylakoid membrane by plastocyanin. The chain is Photosystem I P700 chlorophyll a apoprotein A2 from Mesostigma viride (Green alga).